The following is a 118-amino-acid chain: Large ribosomal subunit protein bL20 (118 aa).

The protein belongs to the bacterial ribosomal protein bL20 family.

In terms of biological role, binds directly to 23S ribosomal RNA and is necessary for the in vitro assembly process of the 50S ribosomal subunit. It is not involved in the protein synthesizing functions of that subunit. The protein is Large ribosomal subunit protein bL20 of Staphylococcus haemolyticus (strain JCSC1435).